We begin with the raw amino-acid sequence, 515 residues long: Protein FAM98A (515 aa).

Disordered regions lie at residues 297 to 410 (VLMG…GYHG) and 432 to 515 (SGYQ…HYTS). Positions 302 to 311 (VPDRGGRPNE) are enriched in basic and acidic residues. Over residues 382–394 (WTDGGSGSGGGYQ) the composition is skewed to gly residues. A compositionally biased stretch (basic and acidic residues) spans 444-456 (RYQDGGHHGERGS). The span at 457 to 481 (GRGGRGGRGGRGGRGSQGGGWGGRG) shows a compositional bias: gly residues. Over residues 485-501 (YHQGGQFEQHFQHGGYQ) the composition is skewed to low complexity. Polar residues predominate over residues 502-515 (YSHSGFGQGRHYTS).

The protein belongs to the FAM98 family. In terms of assembly, interacts (via N- and C-terminus) with DDX1. Interacts (via N- and C-terminus) with C14orf166. Interacts with FAM98B. Interacts with PLEKHM1 (via N- and C-terminus).

Functionally, positively stimulates PRMT1-induced protein arginine methylation. Involved in skeletal homeostasis. Positively regulates lysosome peripheral distribution and ruffled border formation in osteoclasts. The sequence is that of Protein FAM98A from Mus musculus (Mouse).